An 879-amino-acid polypeptide reads, in one-letter code: JmjC domain-containing histone demethylation protein 1 (879 aa).

Disordered stretches follow at residues 1–45, 117–212, and 407–449; these read MSEQ…EEGK, STSP…PKRK, and KDVK…EGLK. A PHD-type zinc finger spans residues 23-116; that stretch reads PEPCPLCRET…KWYCAPCLAR (94 aa). Basic and acidic residues-rich tracts occupy residues 183-192 and 407-433; these read IDMKSEREQQ and KDVK…HLTE. Residues 416-598 form the JmjC domain; sequence NDSRESSEIR…TQLRLRQIEI (183 aa). Thr-472 provides a ligand contact to substrate. The Fe cation site is built by His-475 and Asp-477. Lys-492 provides a ligand contact to substrate. A Fe cation-binding site is contributed by His-566. A disordered region spans residues 763–879; it reads HPPAWSENRQ…KVEEDMDIDH (117 aa). Over residues 769–782 the composition is skewed to polar residues; it reads ENRQSPQIETTTVQ. Residues 786-818 are compositionally biased toward low complexity; that stretch reads PSTSSSDAISGSGPGASPGASANGGANENEQAE. The segment covering 848–864 has biased composition (basic and acidic residues); it reads FVEKKTVWGPKLDKEKI.

This sequence belongs to the JHDM1 histone demethylase family. The cofactor is Fe(2+).

It is found in the nucleus. The enzyme catalyses N(6),N(6)-dimethyl-L-lysyl(36)-[histone H3] + 2 2-oxoglutarate + 2 O2 = L-lysyl(36)-[histone H3] + 2 formaldehyde + 2 succinate + 2 CO2. Histone demethylase that specifically demethylates 'Lys-36' of histone H3, thereby playing a central role in histone code. The chain is JmjC domain-containing histone demethylation protein 1 (JHD1) from Cryptococcus neoformans var. neoformans serotype D (strain B-3501A) (Filobasidiella neoformans).